A 182-amino-acid chain; its full sequence is Crossover junction endodeoxyribonuclease RuvC (182 aa).

Catalysis depends on residues D7, E67, and D139. D7, E67, and D139 together coordinate Mg(2+).

This sequence belongs to the RuvC family. As to quaternary structure, homodimer which binds Holliday junction (HJ) DNA. The HJ becomes 2-fold symmetrical on binding to RuvC with unstacked arms; it has a different conformation from HJ DNA in complex with RuvA. In the full resolvosome a probable DNA-RuvA(4)-RuvB(12)-RuvC(2) complex forms which resolves the HJ. It depends on Mg(2+) as a cofactor.

The protein resides in the cytoplasm. The catalysed reaction is Endonucleolytic cleavage at a junction such as a reciprocal single-stranded crossover between two homologous DNA duplexes (Holliday junction).. Functionally, the RuvA-RuvB-RuvC complex processes Holliday junction (HJ) DNA during genetic recombination and DNA repair. Endonuclease that resolves HJ intermediates. Cleaves cruciform DNA by making single-stranded nicks across the HJ at symmetrical positions within the homologous arms, yielding a 5'-phosphate and a 3'-hydroxyl group; requires a central core of homology in the junction. The consensus cleavage sequence is 5'-(A/T)TT(C/G)-3'. Cleavage occurs on the 3'-side of the TT dinucleotide at the point of strand exchange. HJ branch migration catalyzed by RuvA-RuvB allows RuvC to scan DNA until it finds its consensus sequence, where it cleaves and resolves the cruciform DNA. This is Crossover junction endodeoxyribonuclease RuvC from Bordetella pertussis (strain Tohama I / ATCC BAA-589 / NCTC 13251).